A 132-amino-acid polypeptide reads, in one-letter code: Large ribosomal subunit protein uL14 (132 aa).

This sequence belongs to the universal ribosomal protein uL14 family. As to quaternary structure, part of the 50S ribosomal subunit. Forms a cluster with proteins L3 and L24e, part of which may contact the 16S rRNA in 2 intersubunit bridges.

In terms of biological role, binds to 23S rRNA. Forms part of two intersubunit bridges in the 70S ribosome. This Methanosarcina mazei (strain ATCC BAA-159 / DSM 3647 / Goe1 / Go1 / JCM 11833 / OCM 88) (Methanosarcina frisia) protein is Large ribosomal subunit protein uL14.